Here is a 222-residue protein sequence, read N- to C-terminus: Sugar fermentation stimulation protein homolog (222 aa).

It belongs to the SfsA family.

This is Sugar fermentation stimulation protein homolog from Thermoplasma acidophilum (strain ATCC 25905 / DSM 1728 / JCM 9062 / NBRC 15155 / AMRC-C165).